The primary structure comprises 462 residues: Bifunctional dihydrofolate reductase-thymidylate synthase (462 aa).

The 160-residue stretch at 6–165 (TFSMVLAMTL…INYDYQHLIN (160 aa)) folds into the DHFR domain. Valine 10 provides a ligand contact to substrate. NADP(+) contacts are provided by residues alanine 12 and 18-24 (GIGYQNR). Residue aspartate 32 participates in substrate binding. Residues 49–51 (RKT) and 68–71 (ISKN) contribute to the NADP(+) site. Isoleucine 101 contributes to the substrate binding site. 102 to 109 (GGKRIFEE) lines the NADP(+) pocket. Position 122 (threonine 122) interacts with substrate. The segment at 180–462 (ENQYLDMITK…HDKIEMKMAV (283 aa)) is thymidylate synthase. DUMP is bound at residue arginine 200. Cysteine 345 is an active-site residue. Residues histidine 346, 364-368 (QRSCD), asparagine 376, and 406-408 (HIY) contribute to the dUMP site.

The protein in the N-terminal section; belongs to the dihydrofolate reductase family. In the C-terminal section; belongs to the thymidylate synthase family.

The enzyme catalyses (6S)-5,6,7,8-tetrahydrofolate + NADP(+) = 7,8-dihydrofolate + NADPH + H(+). The catalysed reaction is dUMP + (6R)-5,10-methylene-5,6,7,8-tetrahydrofolate = 7,8-dihydrofolate + dTMP. Its pathway is cofactor biosynthesis; tetrahydrofolate biosynthesis; 5,6,7,8-tetrahydrofolate from 7,8-dihydrofolate: step 1/1. Functionally, bifunctional enzyme. Involved in de novo dTMP biosynthesis. Key enzyme in folate metabolism. Catalyzes an essential reaction for de novo glycine and purine synthesis, DNA precursor synthesis, and for the conversion of dUMP to dTMP. In Paramecium tetraurelia, this protein is Bifunctional dihydrofolate reductase-thymidylate synthase.